The chain runs to 734 residues: Serine protease FAM111B (734 aa).

M1 carries the post-translational modification N-acetylmethionine. Basic and acidic residues-rich tracts occupy residues 1–10 (MNSMKTEENK) and 17–32 (DDQR…TVMK). The tract at residues 1 to 32 (MNSMKTEENKSFSAMEDDQRTRPEVSKDTVMK) is disordered. K284 participates in a covalent cross-link: Glycyl lysine isopeptide (Lys-Gly) (interchain with G-Cter in SUMO2). The interval 285–321 (QNESATDEINHQSLIQSKKKVHKPKKDGETKDVEHSR) is disordered. Residues 310–321 (KDGETKDVEHSR) are compositionally biased toward basic and acidic residues. Active-site charge relay system residues include H490, D544, and S650. A disordered region spans residues 712-734 (TYDEEKGKQESSLQDHQIEPMEC).

It belongs to the FAM111 family. As to expression, widely expressed.

In terms of biological role, serine protease. In Homo sapiens (Human), this protein is Serine protease FAM111B.